A 141-amino-acid polypeptide reads, in one-letter code: uncharacterized protein (141 aa).

A helical transmembrane segment spans residues 13–35 (PVIGVILMVAITVILAAVIASFV).

Its subcellular location is the membrane. This is an uncharacterized protein from Archaeoglobus fulgidus (strain ATCC 49558 / DSM 4304 / JCM 9628 / NBRC 100126 / VC-16).